The primary structure comprises 253 residues: Large ribosomal subunit protein uL4 (253 aa).

Residues 62 to 107 form a disordered region; the sequence is WGSGRGVSHVPRLKNSSRAARVPHAKGGRRAHPPKPEADRSEKVNT. Residues 82–94 are compositionally biased toward basic residues; the sequence is RVPHAKGGRRAHP. A compositionally biased stretch (basic and acidic residues) spans 95-107; that stretch reads PKPEADRSEKVNT.

This sequence belongs to the universal ribosomal protein uL4 family. Part of the 50S ribosomal subunit.

In terms of biological role, one of the primary rRNA binding proteins, this protein initially binds near the 5'-end of the 23S rRNA. It is important during the early stages of 50S assembly. It makes multiple contacts with different domains of the 23S rRNA in the assembled 50S subunit and ribosome. Functionally, forms part of the polypeptide exit tunnel. The sequence is that of Large ribosomal subunit protein uL4 from Methanosarcina mazei (strain ATCC BAA-159 / DSM 3647 / Goe1 / Go1 / JCM 11833 / OCM 88) (Methanosarcina frisia).